Reading from the N-terminus, the 446-residue chain is Deoxyguanosinetriphosphate triphosphohydrolase-like protein (446 aa).

Residues 1–28 (MSSSVWQERRHGEDKQRRNDHRSPFQRD) are disordered. Residues 7 to 28 (QERRHGEDKQRRNDHRSPFQRD) are compositionally biased toward basic and acidic residues. The region spanning 59 to 252 (RLTHSLEVSQ…MELADDIAYA (194 aa)) is the HD domain.

It belongs to the dGTPase family. Type 2 subfamily.

The sequence is that of Deoxyguanosinetriphosphate triphosphohydrolase-like protein from Shewanella sp. (strain MR-7).